The sequence spans 309 residues: Tagatose-6-phosphate kinase 1 (309 aa).

It belongs to the carbohydrate kinase PfkB family. LacC subfamily.

The catalysed reaction is D-tagatofuranose 6-phosphate + ATP = D-tagatofuranose 1,6-bisphosphate + ADP + H(+). The protein operates within carbohydrate metabolism; D-tagatose 6-phosphate degradation; D-glyceraldehyde 3-phosphate and glycerone phosphate from D-tagatose 6-phosphate: step 1/2. The protein is Tagatose-6-phosphate kinase 1 of Streptococcus agalactiae serotype III (strain NEM316).